The chain runs to 287 residues: Cyclopropane mycolic acid synthase MmaA2 (287 aa).

S-adenosyl-L-methionine contacts are provided by residues 33 to 34 (YS), 72 to 74 (GCG), 94 to 99 (TLSKNQ), 123 to 124 (WE), and I136. The active site involves C269.

Belongs to the CFA/CMAS family.

The catalysed reaction is a 1-acyl-2-(9Z)-enoyl-sn-glycero-3-phospholipid + S-adenosyl-L-methionine = a 1-acyl-2-(9-cyclopronane)-acyl-sn-glycero-3-phospholipid + S-adenosyl-L-homocysteine + H(+). Its pathway is lipid metabolism; mycolic acid biosynthesis. Its function is as follows. Catalyzes the conversion of a double bond to a cis cyclopropane ring at the distal position of an alpha mycolic acid via the transfer of a methylene group from S-adenosyl-L-methionine. MmaA2 also catalyzes the biosynthesis of the cis-cyclopropanated methoxymycolates. Cyclopropanated mycolic acids are key factors participating in cell envelope permeability, host immunomodulation and persistence. This chain is Cyclopropane mycolic acid synthase MmaA2 (mmaA2), found in Mycobacterium tuberculosis (strain ATCC 25177 / H37Ra).